The chain runs to 75 residues: Small ribosomal subunit protein bS18 (75 aa).

Belongs to the bacterial ribosomal protein bS18 family. In terms of assembly, part of the 30S ribosomal subunit. Forms a tight heterodimer with protein bS6.

In terms of biological role, binds as a heterodimer with protein bS6 to the central domain of the 16S rRNA, where it helps stabilize the platform of the 30S subunit. This Shewanella baltica (strain OS223) protein is Small ribosomal subunit protein bS18.